The primary structure comprises 252 residues: Putative pinene synthase (252 aa).

The protein belongs to the terpene synthase family. Tpsa subfamily.

This Fragaria ananassa (Strawberry) protein is Putative pinene synthase.